A 520-amino-acid polypeptide reads, in one-letter code: Peptide chain release factor 3 (520 aa).

The region spanning 8–277 (ESRKTFAIIS…HAPMPNARQT (270 aa)) is the tr-type G domain. GTP-binding positions include 17–24 (SHPDAGKT), 85–89 (DTPGH), and 139–142 (NKLD).

It belongs to the TRAFAC class translation factor GTPase superfamily. Classic translation factor GTPase family. PrfC subfamily.

It localises to the cytoplasm. In terms of biological role, increases the formation of ribosomal termination complexes and stimulates activities of RF-1 and RF-2. It binds guanine nucleotides and has strong preference for UGA stop codons. It may interact directly with the ribosome. The stimulation of RF-1 and RF-2 is significantly reduced by GTP and GDP, but not by GMP. This Staphylococcus saprophyticus subsp. saprophyticus (strain ATCC 15305 / DSM 20229 / NCIMB 8711 / NCTC 7292 / S-41) protein is Peptide chain release factor 3.